The sequence spans 275 residues: Adenylate kinase 2 (275 aa).

Gly2 carries the N-myristoyl glycine lipid modification. The interval 21–30 (KKKEKKKKKK) is required for cell membrane translocation but dispensable for cell membrane localization. 39 to 44 (GSGKDT) contributes to the ATP binding site. Residues 59-97 (CISKLLKEYKEEYNKENVLNEEENYFDEIEKCMIDGSLV) are NMP. Residues 95–97 (SLV), 126–129 (GFPR), and Gln133 each bind AMP. Position 164 (Arg164) interacts with ATP. The segment at 165 to 214 (IIDPITNISYNENIIQIIKKKREGQELSDKEQKQLIIDNHLYNNLSNDIL) is LID. Residues Arg220 and Arg231 each coordinate AMP.

The protein belongs to the adenylate kinase family. As to quaternary structure, monomer. Oligomer. Heterodimer composed of NMT and AK2; AK2 myristoylation stabilizes the complex. In terms of processing, myristoylation is required for cell membrane localization. Post-translationally, may be palmitoylated at Cys-4 which stabilizes cell membrane localization of the myristoylated protein.

The protein resides in the parasitophorous vacuole membrane. It carries out the reaction AMP + ATP = 2 ADP. In terms of biological role, catalyzes the reversible transfer of the terminal phosphate group between ATP and AMP. Has very low activity with CTP, GTP, ITP and UTP and no activity with GMP, UMP or IMP in vitro. In Plasmodium falciparum (isolate 3D7), this protein is Adenylate kinase 2.